A 359-amino-acid polypeptide reads, in one-letter code: Protein mab-21-like 2-B (359 aa).

This sequence belongs to the mab-21 family.

The protein resides in the nucleus. It localises to the cytoplasm. Functionally, required for several aspects of embryonic development including normal development of the eye. This chain is Protein mab-21-like 2-B (mab21l2-b), found in Xenopus laevis (African clawed frog).